Reading from the N-terminus, the 193-residue chain is MLTQEQDQQLVERVQRGDKRAFDLLVLKYQHKILGLIVRFVHDAQEAQDVAQEAFIKAYRALGNFRGDSAFYTWLYRIAINTAKNHLVARGRRPPDSDVTAEDAEFFEGDHALKDIESPERAMLRDEIEATVHQTIQQLPEDLRTALTLREFEGLSYEDIATVMQCPVGTVRSRIFRAREAIDKALQPLLREA.

Residues 49–62 (DVAQEAFIKAYRAL) carry the Polymerase core binding motif. The H-T-H motif DNA-binding region spans 157–176 (YEDIATVMQCPVGTVRSRIF).

This sequence belongs to the sigma-70 factor family. ECF subfamily.

Sigma factors are initiation factors that promote the attachment of RNA polymerase to specific initiation sites and are then released. This sigma factor regulates genes such as algD, involved in alginate biosynthesis. The protein is RNA polymerase sigma-H factor (algU) of Pseudomonas aeruginosa (strain ATCC 15692 / DSM 22644 / CIP 104116 / JCM 14847 / LMG 12228 / 1C / PRS 101 / PAO1).